A 130-amino-acid polypeptide reads, in one-letter code: Albumin-1 D (130 aa).

A signal peptide spans 1–26; the sequence is MASVKLASLIVLFATLGMFLTKNVGA. Cystine bridges form between Cys29/Cys46, Cys33/Cys48, and Cys41/Cys58. 2 propeptides span residues 64–69 and 123–130; these read VFLKAN and LLKSVSTA.

Post-translationally, the C-terminal glycine may be removed from PA1b. In terms of tissue distribution, major component of both the cotyledons and embryonic axes of mature seeds.

PA1b binds to basic 7S globulin (BG) and stimulates its phosphorylation activity. Involved in the signal transduction system to regulate the growth and differentiation as a hormone peptide. Toxic to various insects through binding to a high affinity binding site in the insect gut. This is Albumin-1 D from Pisum sativum (Garden pea).